Consider the following 338-residue polypeptide: Oxygen-dependent coproporphyrinogen-III oxidase (338 aa).

Serine 104 is a binding site for substrate. The a divalent metal cation site is built by histidine 108 and histidine 118. Histidine 118 serves as the catalytic Proton donor. 120–122 lines the substrate pocket; that stretch reads NYR. Positions 152 and 182 each coordinate a divalent metal cation. The interval 274-309 is important for dimerization; that stretch reads YVEFNLVYDRGTIFGLQTNGRTESILMSLPPLVRWE.

Belongs to the aerobic coproporphyrinogen-III oxidase family. As to quaternary structure, homodimer. A divalent metal cation is required as a cofactor.

Its subcellular location is the cytoplasm. The catalysed reaction is coproporphyrinogen III + O2 + 2 H(+) = protoporphyrinogen IX + 2 CO2 + 2 H2O. It functions in the pathway porphyrin-containing compound metabolism; protoporphyrin-IX biosynthesis; protoporphyrinogen-IX from coproporphyrinogen-III (O2 route): step 1/1. Involved in the heme and chlorophyll biosynthesis. Catalyzes the aerobic oxidative decarboxylation of propionate groups of rings A and B of coproporphyrinogen-III to yield the vinyl groups in protoporphyrinogen-IX. The protein is Oxygen-dependent coproporphyrinogen-III oxidase of Thermosynechococcus vestitus (strain NIES-2133 / IAM M-273 / BP-1).